Here is a 422-residue protein sequence, read N- to C-terminus: Interleukin-11 receptor subunit alpha (422 aa).

An N-terminal signal peptide occupies residues 1-22 (MSSSCSGLSRVLVAVATALVSA). Topologically, residues 24 to 370 (SPCPQAWGPP…DSVEQVAVLV (347 aa)) are extracellular. One can recognise an Ig-like C2-type domain in the interval 27 to 110 (PQAWGPPGVQ…LGGTVTLQLG (84 aa)). Intrachain disulfides connect Cys-48-Cys-94, Cys-120-Cys-130, and Cys-170-Cys-180. Fibronectin type-III domains follow at residues 112-219 (PPAR…LRPD) and 220-317 (PPQG…TPST). Residue Asn-127 is glycosylated (N-linked (GlcNAc...) asparagine). Residue Asn-194 is glycosylated (N-linked (GlcNAc...) asparagine). Positions 304 to 308 (WSTWS) match the WSXWS motif motif. The tract at residues 335-355 (EVEPQVDSPAPPRPSLQPHPR) is disordered. Residues 371 to 391 (SLGILSFLGLVAGALALGLWL) traverse the membrane as a helical segment. Residues 392-422 (RLRRGGKDGSPKPGFLASVIPVDRHPGAPNL) lie on the Cytoplasmic side of the membrane.

This sequence belongs to the type I cytokine receptor family. Type 3 subfamily. In terms of assembly, on IL11 binding, forms a multimer complex with IL6ST/gp130. Post-translationally, a short soluble form is also released from the membrane by proteolysis. The sIL11RA is formed either by limited proteolysis of membrane-bound receptors, a process referred to as ectodomain shedding, or directly secreted from the cells after alternative mRNA splicing. mIL11RA is cleaved by the proteases ADAM10, ELANE and PRTN3.

Its subcellular location is the membrane. It localises to the secreted. Its function is as follows. Receptor for interleukin-11 (IL11). The receptor systems for IL6, LIF, OSM, CNTF, IL11 and CT1 can utilize IL6ST for initiating signal transmission. The IL11/IL11RA/IL6ST complex may be involved in the control of proliferation and/or differentiation of skeletogenic progenitor or other mesenchymal cells. Essential for the normal development of craniofacial bones and teeth. Restricts suture fusion and tooth number. In terms of biological role, soluble form of IL11 receptor (sIL11RA) that acts as an agonist of IL11 activity. The IL11:sIL11RA complex binds to IL6ST/gp130 on cell surfaces and induces signaling also on cells that do not express membrane-bound IL11RA in a process called IL11 trans-signaling. In Pongo abelii (Sumatran orangutan), this protein is Interleukin-11 receptor subunit alpha (IL11RA).